Here is a 596-residue protein sequence, read N- to C-terminus: Elongation factor 4 (596 aa).

A tr-type G domain is found at K2–E184. Residues D14 to T19 and N131 to D134 contribute to the GTP site.

It belongs to the TRAFAC class translation factor GTPase superfamily. Classic translation factor GTPase family. LepA subfamily.

Its subcellular location is the cell inner membrane. It carries out the reaction GTP + H2O = GDP + phosphate + H(+). In terms of biological role, required for accurate and efficient protein synthesis under certain stress conditions. May act as a fidelity factor of the translation reaction, by catalyzing a one-codon backward translocation of tRNAs on improperly translocated ribosomes. Back-translocation proceeds from a post-translocation (POST) complex to a pre-translocation (PRE) complex, thus giving elongation factor G a second chance to translocate the tRNAs correctly. Binds to ribosomes in a GTP-dependent manner. The protein is Elongation factor 4 of Shewanella sp. (strain ANA-3).